The primary structure comprises 197 residues: Amino-terminal enhancer of split (197 aa).

A compositionally biased stretch (low complexity) spans 1 to 15; the sequence is MMFPQSSSRHSGSSH. 2 disordered regions span residues 1–20 and 169–197; these read MMFP…PQQL and LGSQ…DKSD. A CCN domain region spans residues 166 to 197; it reads LSALGSQGHLPKEDKNGHEGDRRPDDDGDKSD. Residues 175-197 are compositionally biased toward basic and acidic residues; that stretch reads LPKEDKNGHEGDRRPDDDGDKSD.

It belongs to the WD repeat Groucho/TLE family. Monomer. In terms of processing, ubiquitinated by XIAP/BIRC4. In terms of tissue distribution, predominantly expressed in brain, testis and ovary. Ubiquitously expressed in the developing embryo. Present in unfertilized and fertilized eggs.

It localises to the nucleus. Functionally, may act as a transcriptional corepressor. Has a possible role in the negative regulation of proteins containing WD-40 repeats. May be required for the initiation and maintenance of the differentiated state. The polypeptide is Amino-terminal enhancer of split (aes) (Xenopus laevis (African clawed frog)).